The sequence spans 281 residues: Dexamethasone-induced Ras-related protein 1 (281 aa).

C11 is modified (S-nitrosocysteine). 31-38 (GSSKVGKT) contributes to the GTP binding site. An Effector region motif is present at residues 53-61 (YTPTIEDFH). Residues 78–82 (DTSGN) and 145–148 (NKGD) contribute to the GTP site. Position 278 is a cysteine methyl ester (C278). C278 is lipidated: S-farnesyl cysteine. A propeptide spans 279–281 (VIS) (removed in mature form).

Belongs to the small GTPase superfamily. RasD family. In terms of assembly, forms a ternary complex with CAPON and NOS1. Component of a complex, at least composed of APBB1, RASD1/DEXRAS1 and APP. Interacts with APBB1/FE65. Post-translationally, S-nitrosylation stimulates guanine-nucleotide exchange activity. Expressed in a variety of tissues including heart, cardiovascular tissues, brain, placenta, lung, liver, skeletal muscle, kidney, pancreas, gastrointestinal and reproductive tissues.

Its subcellular location is the cell membrane. It localises to the cytoplasm. It is found in the perinuclear region. The protein resides in the nucleus. Functionally, small GTPase. Negatively regulates the transcription regulation activity of the APBB1/FE65-APP complex via its interaction with APBB1/FE65. This Homo sapiens (Human) protein is Dexamethasone-induced Ras-related protein 1 (RASD1).